We begin with the raw amino-acid sequence, 605 residues long: Probable potassium transport system protein Kup 2 (605 aa).

12 helical membrane passes run 17 to 37 (GLVF…IMTL), 45 to 65 (VLGI…VEYA), 96 to 116 (MAFA…DGVI), 139 to 159 (AQGG…IFQF), 169 to 189 (FGPI…VSII), 211 to 231 (GLAG…GEAL), 246 to 266 (AWYF…AFIL), 286 to 306 (LYIP…QALI), 338 to 358 (IYIG…MILF), 367 to 387 (AYGL…TMIF), 394 to 414 (WKVP…TANL), and 417 to 437 (LPHG…IMVI).

The protein belongs to the HAK/KUP transporter (TC 2.A.72) family.

Its subcellular location is the cell inner membrane. It carries out the reaction K(+)(in) + H(+)(in) = K(+)(out) + H(+)(out). Its function is as follows. Transport of potassium into the cell. Likely operates as a K(+):H(+) symporter. This chain is Probable potassium transport system protein Kup 2, found in Geobacter sulfurreducens (strain ATCC 51573 / DSM 12127 / PCA).